We begin with the raw amino-acid sequence, 247 residues long: MPITVNKLRHDTHHFFYKKIGAIFFISIFATFMNILIDMFIKPDMHIVSIMENNKFINTSSLLEFIQNMNLNEKHELLKYSILKIMESLISKTTLLGSIIILISVVSEPKKKSIVSSIRTFFLFFPSLFILNFLTTFIIQIGFMLLIIPGILLSIILSLSPIILFFKKNRLLDSIRLSMYISWKYIKIIGPGVLFWMCGKFILTMLLAHFSLINKNVLFLISNISMNILFSILIIYLFRFYMIFLRS.

The next 6 membrane-spanning stretches (helical) occupy residues 20–40 (IGAIFFISIFATFMNILIDMF), 85–105 (IMESLISKTTLLGSIIILISV), 114–134 (IVSSIRTFFLFFPSLFILNFL), 137–157 (FIIQIGFMLLIIPGILLSIIL), 188–208 (IIGPGVLFWMCGKFILTMLLA), and 218–238 (LFLISNISMNILFSILIIYLF).

The protein belongs to the UPF0259 family.

Its subcellular location is the cell membrane. The protein is UPF0259 membrane protein BU276 of Buchnera aphidicola subsp. Acyrthosiphon pisum (strain APS) (Acyrthosiphon pisum symbiotic bacterium).